A 663-amino-acid chain; its full sequence is MKDLFKIYSNYQPAGDQPTAIASLIDGLESGLAKQTLLGVTGSGKTFTIAHVIQAMKRPTLIMAPNKTLAAQLYGEFKAFFPDNAVEYFVSYYDYYQPEAYVPASDTFIEKDASINEHIEQMRLSATKALIERKDAIIVATVSAIYGLGDPDSYLRMLLHLSRGEQSDQRKILKRLAEMQYTRTNLSLERGQFRVHGDVIDIFPADSEKEAIRIELFDDEVDNIARFDPLTGEILQRLPRVTIFPKTHYVTPRERILETVEKVKVELQERLAELNAQNKLVEAQRLEQRTCFDIEMMLELGYCSGIENYSRYLSNREAGEAPPTLFDYLPPEALLIIDESHVTVPQIGGMYRGDRARKETLVNYGFRLPSALDNRPLRFEEFEERSPQTIYISATPGPYEQEHSDNVAEQVVRPTGLIDPEVEIRPVKTQVDDLMSEIRQVIAQGSRILVTTLTKRMAEDLTEYLSEHGIKVRYLHSDVDTVERMEIIRDLRLGEFDVLVGINLLREGLDMPEVALVAILDADKEGFLRSERSLIQTIGRAARNVKGRAILYADTITGSMQRALTETERRREKQKAFNLEHGITPKGINKSVEDILEGAYIGKRKTVVAEKSPQYTHWSPQELVKQINALEKQMYSHAQNMEFELAAKIRDEYLLLKEQLMKI.

Residues 26–414 (DGLESGLAKQ…DNVAEQVVRP (389 aa)) enclose the Helicase ATP-binding domain. 39-46 (GVTGSGKT) lines the ATP pocket. A Beta-hairpin motif is present at residues 92 to 115 (YYDYYQPEAYVPASDTFIEKDASI). In terms of domain architecture, Helicase C-terminal spans 430–596 (QVDDLMSEIR…GINKSVEDIL (167 aa)). Residues 624–659 (VKQINALEKQMYSHAQNMEFELAAKIRDEYLLLKEQ) enclose the UVR domain.

The protein belongs to the UvrB family. In terms of assembly, forms a heterotetramer with UvrA during the search for lesions. Interacts with UvrC in an incision complex.

The protein resides in the cytoplasm. Functionally, the UvrABC repair system catalyzes the recognition and processing of DNA lesions. A damage recognition complex composed of 2 UvrA and 2 UvrB subunits scans DNA for abnormalities. Upon binding of the UvrA(2)B(2) complex to a putative damaged site, the DNA wraps around one UvrB monomer. DNA wrap is dependent on ATP binding by UvrB and probably causes local melting of the DNA helix, facilitating insertion of UvrB beta-hairpin between the DNA strands. Then UvrB probes one DNA strand for the presence of a lesion. If a lesion is found the UvrA subunits dissociate and the UvrB-DNA preincision complex is formed. This complex is subsequently bound by UvrC and the second UvrB is released. If no lesion is found, the DNA wraps around the other UvrB subunit that will check the other stand for damage. In Legionella pneumophila subsp. pneumophila (strain Philadelphia 1 / ATCC 33152 / DSM 7513), this protein is UvrABC system protein B.